The sequence spans 1132 residues: Phospholipid-transporting ATPase IG (1132 aa).

The Cytoplasmic segment spans residues 1–66; that stretch reads MQMVPSLPPA…NFLPKNLFEQ (66 aa). Residues 67 to 85 traverse the membrane as a helical segment; the sequence is FRRIANFYFLIIFLVQVTV. Residue Asp86 is a topological domain, extracellular. Residues 87 to 107 traverse the membrane as a helical segment; the sequence is TPTSPVTSGLPLFFVITVTAI. Residues 108–290 lie on the Cytoplasmic side of the membrane; it reads KQGYEDCLRH…SQKRSAVEKS (183 aa). A helical membrane pass occupies residues 291–311; that stretch reads INAFLIVYLFILLTKAAVCTT. Residues 312 to 346 are Extracellular-facing; the sequence is LKYVWQSTPYNDEPWYNQKTQKERETLKVLKMFTD. The helical transmembrane segment at 347 to 367 threads the bilayer; it reads FLSFMVLFNFIIPVSMYVTVE. Topologically, residues 368 to 879 are cytoplasmic; the sequence is MQKFLGSFFI…YVRIAHLVQY (512 aa). Asp412 (4-aspartylphosphate intermediate) is an active-site residue. Residues Asp412, Lys413, and Thr414 each contribute to the ATP site. Asp412 is a Mg(2+) binding site. Thr414 contributes to the Mg(2+) binding site. Ser445 is modified (phosphoserine). Residues Glu501, Phe543, Lys566, Arg597, Thr677, Gly678, Asp679, Arg792, and Lys798 each contribute to the ATP site. Asp819 serves as a coordination point for Mg(2+). ATP contacts are provided by Asn822 and Asp823. Residue Asp823 coordinates Mg(2+). A helical transmembrane segment spans residues 880 to 900; that stretch reads FFYKNLCFILPQFLYQFFCGF. The Extracellular portion of the chain corresponds to 901 to 908; the sequence is SQQPLYDA. The helical transmembrane segment at 909–929 threads the bilayer; it reads AYLTMYNICFTSLPILAYSLL. At 930–955 the chain is on the cytoplasmic side; sequence EQHINIDTLTSDPRLYMKISGNAMLQ. The helical transmembrane segment at 956–976 threads the bilayer; the sequence is LGPFLYWTFLAAFEGTVFFFG. Over 977–995 the chain is Extracellular; that stretch reads TYFLFQTASLEENGKVYGN. Residues 996–1016 form a helical membrane-spanning segment; the sequence is WTFGTIVFTVLVFTVTLKLAL. The Cytoplasmic segment spans residues 1017 to 1026; it reads DTRFWTWINH. Residues 1027–1047 traverse the membrane as a helical segment; sequence FVIWGSLAFYVFFSFFWGGII. Topologically, residues 1048–1069 are extracellular; sequence WPFLKQQRMYFVFAQMLSSVST. The helical transmembrane segment at 1070–1090 threads the bilayer; that stretch reads WLAIILLIFISLFPEILLIVL. At 1091 to 1132 the chain is on the cytoplasmic side; sequence KNVRRRSARRNLSCRRASDSLSARPSVRPLLLRTFSDESNVL. 3 positions are modified to phosphoserine: Ser1108, Ser1116, and Ser1126. A Di-leucine motif motif is present at residues 1116-1121; the sequence is SVRPLL.

It belongs to the cation transport ATPase (P-type) (TC 3.A.3) family. Type IV subfamily. As to quaternary structure, component of a P4-ATPase flippase complex which consists of a catalytic alpha subunit ATP11C and an accessory beta subunit TMEM30A. Requires Mg(2+) as cofactor. Post-translationally, proteolytically cleaved by CASP3, CASP6 and CASP7. In terms of processing, phosphorylated at Ser-1116 likely by PRKCA; this creates a functional di-leucine motif that is sufficient for endocytosis. As to expression, widely expressed.

Its subcellular location is the cell membrane. It is found in the endoplasmic reticulum membrane. It localises to the early endosome membrane. The protein localises to the recycling endosome membrane. The catalysed reaction is ATP + H2O + phospholipidSide 1 = ADP + phosphate + phospholipidSide 2.. It carries out the reaction a 1,2-diacyl-sn-glycero-3-phospho-L-serine(out) + ATP + H2O = a 1,2-diacyl-sn-glycero-3-phospho-L-serine(in) + ADP + phosphate + H(+). It catalyses the reaction a 1,2-diacyl-sn-glycero-3-phosphoethanolamine(out) + ATP + H2O = a 1,2-diacyl-sn-glycero-3-phosphoethanolamine(in) + ADP + phosphate + H(+). Its activity is regulated as follows. The flippase activity is inactivated by caspase-mediated cleavage in apoptotic cells, allowing for PS exposure on the cell surface and engulfment of apoptotic cells by macrophages. The ATPase activity is up-regulated by aminophospholipids PS and PE and down-regulated by Increasing intracellular Ca2+ levels. Functionally, catalytic component of a P4-ATPase flippase complex which catalyzes the hydrolysis of ATP coupled to the transport of aminophospholipids, phosphatidylserines (PS) and phosphatidylethanolamines (PE), from the outer to the inner leaflet of the plasma membrane. Major PS-flippase in immune cell subsets. In erythrocyte plasma membrane, it is required to maintain PS in the inner leaflet preventing its exposure on the surface. This asymmetric distribution is critical for the survival of erythrocytes in circulation since externalized PS is a phagocytic signal for erythrocyte clearance by splenic macrophages. Required for B cell differentiation past the pro-B cell stage. Seems to mediate PS flipping in pro-B cells. May be involved in the transport of cholestatic bile acids. This Homo sapiens (Human) protein is Phospholipid-transporting ATPase IG.